We begin with the raw amino-acid sequence, 1953 residues long: MLKNSGSKHSNSKESHSNSSSGIFQNLKRLANSNATNSNTGSPTYASQQQHSPVGNEVSTSPASSSSFRKLNAPSRSTSTEARPLNKKSTLNTQNLSQYMNGKLSGDVPVSSQHARSHSMQSKYSYSKRNSSQASNKLTRQHTGQSHSASSLLSQGSLTNLSKFTTPDGKIYLEMPSDPYEVEVLFEDIMYKRNIFQSLSEDKQEALMGYSIEKKWLIVKQDLQNELKKMRANTTSSSTASRTSMASDHHPILTANSSLSSPKSVLMTSASSPTSTVYSNSLNHSTTLSSVGTSTSKGKKLVSGSLKKQPSLNNIYRGGAENNTSASTLPGDRTNRPPIHYVQRILADKLTSDEMKDLWVTLRTEQLDWVDAFIDHQGHIAMANVLMNSIYKTAPRENLTKELLEKENSFFKCFRVLSMLSQGLYEFSTHRLMTDTVAEGLFSTKLATRKMATEIFVCMLEKKNKSRFEAVLTSLDKKFRIGQNLHMIQNFKKMPQYFSHLTLESHLKIIQAWLFAVEQTLDGRGKMGSLVGASDEFKNGGGENAILEYCQWTMVFINHLCSCSDNINQRMLLRTKLENCGILRIMNKIKLLDYDKVIDQIELYDNNKLDDFNVKLEANNKAFNVDLHDPLSLLKNLWDICKGTENEKLLVSLVQHLFLSSSKLIEENQNSSKLTKQLKLMDSLVTNVSVASTSDEETNMNMAIQRLYDAMQTDEVARRAILESRALTKKLEEIQAERDSLSEKLSKAEHGLVGQLEDELHERDRILAKNQRVMQQLEAELEELKKKHLLEKHQQEVELRKMLTILNSRPEESFNKNEGTRGMNSSLNSSEKANIQKVLQDGLSRAKKDYKDDSKKFGMTLQPNKRLKMLRMQMENIENEARQLEMTNFAEFEKDRLEPPIHIKKPKVKKMKNKDRKPLVKPQEADVNKLNDLRRALAEIQMESNDISKFNVEERVNELFNEKKSLALKRLKELETKYKGFGIDFNVDEIMDSPKKNTGDVETEEDANYASLDPKTYQKKLDEINRITDQLLDIQTQTEHEIQVEEDGESDLSSSSSDDESEEIYQDASPTQELRSEHSELSSGSGPGSFLDALSQKYGTGQNVTASAAFGENNNGSGIGPLHSKVEKTFMNRLRKSTVSSAPYLEELTQKVNKVEPYEQNEDEGLDKKSLPENSTASAASAFDKAEKDMRQHVENGKQGRVVNHEEDKTADFSAVSKLNNTDGAEDLSTQSSVLSSQPPPPPPPPPPVPAKLFGESLEKEKKSEDDTVKQETTGDSPAPPPPPPPPPPPPMALFGKPKGETPPPPPLPSVLSSSTDGVIPPAPPMMPASQIKSAVTSPLLPQSPSLFEKYPRPHKKLKQLHWEKLDCTDNSIWGTGKAEKFADDLYEKGVLADLEKAFAAREIKSLASKRKEDLQKITFLSRDISQQFGINLHMYSSLSVADLVKKILNCDRDFLQTPSVVEFLSKSEIIEVSVNLARNYAPYSTDWEGVRNLEDAKPPEKDPNDLQRADQIYLQLMVNLESYWGSRMRALTVVTSYEREYNELLAKLRKVDKAVSALQESDNLRNVFNVILAVGNFMNDTSKQAQGFKLSTLQRLTFIKDTTNSMTFLNYVEKIVRLNYPSFNDFLSELEPVLDVVKVSIEQLVNDCKDFSQSIVNVERSVEIGNLSDSSKFHPLDKVLIKTLPVLPEARKKGDLLEDEVKLTIMEFESLMHTYGEDSGDKFAKISFFKKFADFINEYKKAQAQNLAAEEEERLYIKHKKIVEEQQKRAQEKEKQKENSNSPSSEGNEEDEAEDRRAVMDKLLEQLKNAGPAKSDPSSARKRALVRKKYLSEKDNAPQLLNDLDTEEGSILYSPEAMDPTADTVIHAESPTPLATRGVMNTSEDLPSPSKTSALEDQEEISDRARMLLKELRGSDTPVKQNSILDEHLEKLRARKERSIGEASTGNRLSFK.

4 disordered regions span residues 1 to 152 (MLKN…ASSL), 230 to 258 (MRANTTSSSTASRTSMASDHHPILTANSS), 263 to 282 (KSVLMTSASSPTSTVYSNSL), and 287 to 306 (TLSSVGTSTSKGKKLVSGSL). A compositionally biased stretch (low complexity) spans 31–40 (ANSNATNSNT). Polar residues-rich tracts occupy residues 41 to 100 (GSPT…SQYM) and 110 to 143 (VSSQHARSHSMQSKYSYSKRNSSQASNKLTRQHT). Positions 174-696 (EMPSDPYEVE…NVSVASTSDE (523 aa)) constitute a GBD/FH3 domain. A compositionally biased stretch (low complexity) spans 232-246 (ANTTSSSTASRTSMA). Residues 263–278 (KSVLMTSASSPTSTVY) are compositionally biased toward polar residues. 2 positions are modified to phosphoserine: serine 311 and serine 325. The interval 312–337 (LNNIYRGGAENNTSASTLPGDRTNRP) is disordered. Coiled-coil stretches lie at residues 712-807 (QTDE…TILN), 864-894 (NKRLKMLRMQMENIENEARQLEMTNFAEFEK), and 928-981 (NKLN…YKGF). Disordered regions lie at residues 990 to 1014 (IMDSPKKNTGDVETEEDANYASLDP), 1040 to 1094 (HEIQ…LDAL), and 1149 to 1330 (TQKV…MPAS). The region spanning 1053–1337 (SSSSSDDESE…PASQIKSAVT (285 aa)) is the FH1 domain. Phosphoserine is present on residues serine 1085 and serine 1170. A compositionally biased stretch (basic and acidic residues) spans 1184–1211 (DKAEKDMRQHVENGKQGRVVNHEEDKTA). Positions 1217–1237 (SKLNNTDGAEDLSTQSSVLSS) are enriched in polar residues. The segment covering 1238–1250 (QPPPPPPPPPPVP) has biased composition (pro residues). The span at 1257–1270 (SLEKEKKSEDDTVK) shows a compositional bias: basic and acidic residues. Residues 1278–1292 (PAPPPPPPPPPPPPM) are compositionally biased toward pro residues. Residues serine 1338 and serine 1344 each carry the phosphoserine modification. The 419-residue stretch at 1348 to 1766 (FEKYPRPHKK…YIKHKKIVEE (419 aa)) folds into the FH2 domain. Residues 1732–1811 (KFADFINEYK…DKLLEQLKNA (80 aa)) adopt a coiled-coil conformation. The segment covering 1768 to 1779 (QKRAQEKEKQKE) has biased composition (basic and acidic residues). Disordered regions lie at residues 1768-1797 (QKRAQEKEKQKENSNSPSSEGNEEDEAEDR), 1809-1844 (KNAGPAKSDPSSARKRALVRKKYLSEKDNAPQLLND), and 1872-1899 (PTPLATRGVMNTSEDLPSPSKTSALEDQ). One can recognise a DAD domain in the interval 1792-1826 (DEAEDRRAVMDKLLEQLKNAGPAKSDPSSARKRAL). The span at 1821 to 1830 (ARKRALVRKK) shows a compositional bias: basic residues. Residues 1880–1896 (VMNTSEDLPSPSKTSAL) are compositionally biased toward polar residues. Threonine 1918 carries the post-translational modification Phosphothreonine.

Belongs to the formin homology family. BNI1 subfamily. As to quaternary structure, homodimer, and possibly also homotetramer. Interacts with PFY1 via the FH1 domain and with actin via the FH2 domain.

It is found in the cell membrane. It localises to the cell projection. The protein resides in the ruffle membrane. Its subcellular location is the cytoplasm. The protein localises to the cytoskeleton. Its function is as follows. Required for the assembly of F-actin structures, such as actin cables and stress fibers. Nucleates actin filaments. Binds to the barbed end of the actin filament and acts as a leaky capper, slowing both polymerization and depolymerization. Protects the growing actin fiber from tight capping proteins and so increases the time of elongation and the total amount of F-actin. May organize microtubules by mediating spindle positioning and movement in the budding process. Potential target of the RHO family members. The polypeptide is Protein BNI1 (BNI1) (Saccharomyces cerevisiae (strain ATCC 204508 / S288c) (Baker's yeast)).